The following is a 176-amino-acid chain: Ribosome rescue factor SmrB (176 aa).

The Smr domain occupies 98-173 (LDLHGLTQKQ…GTAALLLLIE (76 aa)).

It belongs to the SmrB family. As to quaternary structure, associates with collided ribosomes, but not with correctly translating polysomes.

Functionally, acts as a ribosome collision sensor. Detects stalled/collided disomes (pairs of ribosomes where the leading ribosome is stalled and a second ribosome has collided with it) and endonucleolytically cleaves mRNA at the 5' boundary of the stalled ribosome. Stalled/collided disomes form a new interface (primarily via the 30S subunits) that binds SmrB. Cleaved mRNA becomes available for tmRNA ligation, leading to ribosomal subunit dissociation and rescue of stalled ribosomes. The chain is Ribosome rescue factor SmrB from Yersinia pseudotuberculosis serotype O:1b (strain IP 31758).